The sequence spans 447 residues: D-ribitol-5-phosphate cytidylyltransferase (447 aa).

Belongs to the IspD/TarI cytidylyltransferase family. IspD subfamily. As to quaternary structure, homodimer.

It localises to the cytoplasm. The protein localises to the cytosol. It catalyses the reaction D-ribitol 5-phosphate + CTP + H(+) = CDP-L-ribitol + diphosphate. The enzyme catalyses D-ribose 5-phosphate + CTP + H(+) = CDP-D-ribose + diphosphate. The catalysed reaction is D-ribulose 5-phosphate + CTP + H(+) = CDP-D-ribulose + diphosphate. It participates in protein modification; protein glycosylation. In terms of biological role, cytidylyltransferase required for protein O-linked mannosylation. Catalyzes the formation of CDP-ribitol nucleotide sugar from D-ribitol 5-phosphate. CDP-ribitol is a substrate of FKTN during the biosynthesis of the phosphorylated O-mannosyl trisaccharide (N-acetylgalactosamine-beta-3-N-acetylglucosamine-beta-4-(phosphate-6-)mannose), a carbohydrate structure present in alpha-dystroglycan (DAG1), which is required for binding laminin G-like domain-containing extracellular proteins with high affinity. Shows activity toward other pentose phosphate sugars and mediates formation of CDP-ribulose or CDP-ribose using CTP and ribulose-5-phosphate or ribose-5-phosphate, respectively. Not involved in dolichol production. This Mus musculus (Mouse) protein is D-ribitol-5-phosphate cytidylyltransferase (Crppa).